Reading from the N-terminus, the 418-residue chain is Glutamyl-tRNA reductase (418 aa).

Substrate contacts are provided by residues T49–R52, S109, E114–Q116, and Q120. C50 functions as the Nucleophile in the catalytic mechanism. NADP(+) is bound at residue G189–I194.

Belongs to the glutamyl-tRNA reductase family. As to quaternary structure, homodimer.

The catalysed reaction is (S)-4-amino-5-oxopentanoate + tRNA(Glu) + NADP(+) = L-glutamyl-tRNA(Glu) + NADPH + H(+). The protein operates within porphyrin-containing compound metabolism; protoporphyrin-IX biosynthesis; 5-aminolevulinate from L-glutamyl-tRNA(Glu): step 1/2. Its function is as follows. Catalyzes the NADPH-dependent reduction of glutamyl-tRNA(Glu) to glutamate 1-semialdehyde (GSA). The polypeptide is Glutamyl-tRNA reductase (Klebsiella pneumoniae (strain 342)).